The primary structure comprises 608 residues: UvrABC system protein C (608 aa).

The GIY-YIG domain maps to 16–94 (NRPGVYRMFD…IKEWRPPYNI (79 aa)). Residues 204–239 (NALADELNTGMEQAAMRLDFEKAAELRDQVAILRRV) enclose the UVR domain.

This sequence belongs to the UvrC family. As to quaternary structure, interacts with UvrB in an incision complex.

Its subcellular location is the cytoplasm. The UvrABC repair system catalyzes the recognition and processing of DNA lesions. UvrC both incises the 5' and 3' sides of the lesion. The N-terminal half is responsible for the 3' incision and the C-terminal half is responsible for the 5' incision. The polypeptide is UvrABC system protein C (Pseudomonas paraeruginosa (strain DSM 24068 / PA7) (Pseudomonas aeruginosa (strain PA7))).